Here is a 394-residue protein sequence, read N- to C-terminus: Argininosuccinate synthase (394 aa).

Residues 7–15 (AYSGGLDTS) and Ala-34 each bind ATP. L-citrulline contacts are provided by Tyr-85 and Ser-90. Residue Gly-115 participates in ATP binding. Positions 117, 121, and 122 each coordinate L-aspartate. Residue Asn-121 participates in L-citrulline binding. Arg-125, Ser-176, Ser-185, Glu-261, and Tyr-273 together coordinate L-citrulline.

Belongs to the argininosuccinate synthase family. Type 1 subfamily. In terms of assembly, homotetramer.

The protein resides in the cytoplasm. The enzyme catalyses L-citrulline + L-aspartate + ATP = 2-(N(omega)-L-arginino)succinate + AMP + diphosphate + H(+). The protein operates within amino-acid biosynthesis; L-arginine biosynthesis; L-arginine from L-ornithine and carbamoyl phosphate: step 2/3. This chain is Argininosuccinate synthase, found in Ehrlichia ruminantium (strain Welgevonden).